A 355-amino-acid polypeptide reads, in one-letter code: MSAFKPLVFSGVQPTGNLHLGNYLGAIKKFVALQETSDCIYCVVDLHSLTAQLVHEDLADQTRSITAAFLASGIDPKKHIVFNQSRVMQHAELAWIFNCVARIGWMNKMTQFKDKAGKDRENASLGLLAYPSLMAADILLYRATHVPVGEDQKQHLELTRDIAQKFNNDFSDRIARLGVGVEMQVGEETVNGFFPITEPVIGGPAARIMSLRDGSKKMSKSDPSDLSRINLTDDADTISKKIRKAKTDPEALPSEVSGLESRPEAENLVGIYAGLAEMSKADVLKEFGGQQFSVFKPALADLAVEKLAPIAGEMRRIEGDRAYVDAVLRDGGERAGVLAETTMKTVRDIIGLLQG.

ATP is bound by residues 13–15 and 21–22; these read QPT and GN. A 'HIGH' region motif is present at residues 14-22; the sequence is PTGNLHLGN. Aspartate 137 is a binding site for L-tryptophan. ATP-binding positions include 149 to 151, isoleucine 208, and 217 to 221; these read GED and KMSKS. Residues 217–221 carry the 'KMSKS' region motif; that stretch reads KMSKS.

The protein belongs to the class-I aminoacyl-tRNA synthetase family. Homodimer.

Its subcellular location is the cytoplasm. It catalyses the reaction tRNA(Trp) + L-tryptophan + ATP = L-tryptophyl-tRNA(Trp) + AMP + diphosphate + H(+). Its function is as follows. Catalyzes the attachment of tryptophan to tRNA(Trp). This is Tryptophan--tRNA ligase from Mesorhizobium japonicum (strain LMG 29417 / CECT 9101 / MAFF 303099) (Mesorhizobium loti (strain MAFF 303099)).